Consider the following 433-residue polypeptide: 26S proteasome regulatory subunit 7 (433 aa).

Positions 1–22 (MPDYLGADQRKTKEDEKDDKPI) are disordered. Residues 8–22 (DQRKTKEDEKDDKPI) show a composition bias toward basic and acidic residues. K116 carries the N6-acetyllysine modification. 216 to 223 (GPPGTGKT) is an ATP binding site. K422 bears the N6-acetyllysine mark.

The protein belongs to the AAA ATPase family. Component of the 19S proteasome regulatory particle complex. The 26S proteasome consists of a 20S core particle (CP) and two 19S regulatory subunits (RP). The regulatory particle is made of a lid composed of 9 subunits, a base containing 6 ATPases including PSMC2 and few additional components. Interacts with NDC80 and SQSTM1. Interacts with PAAF1. Interacts with TRIM5. Post-translationally, monoubiquitinated by RNF181. In terms of processing, phosphorylated. Dephosphorylated by UBLCP1 which impairs PSMC2 ATPase activity and disrupts 26S proteasome assembly.

It is found in the cytoplasm. Component of the 26S proteasome, a multiprotein complex involved in the ATP-dependent degradation of ubiquitinated proteins. This complex plays a key role in the maintenance of protein homeostasis by removing misfolded or damaged proteins, which could impair cellular functions, and by removing proteins whose functions are no longer required. Therefore, the proteasome participates in numerous cellular processes, including cell cycle progression, apoptosis, or DNA damage repair. PSMC2 belongs to the heterohexameric ring of AAA (ATPases associated with diverse cellular activities) proteins that unfolds ubiquitinated target proteins that are concurrently translocated into a proteolytic chamber and degraded into peptides. This is 26S proteasome regulatory subunit 7 (Psmc2) from Rattus norvegicus (Rat).